We begin with the raw amino-acid sequence, 555 residues long: Exodeoxyribonuclease 7 large subunit (555 aa).

The protein belongs to the XseA family. Heterooligomer composed of large and small subunits.

The protein localises to the cytoplasm. It catalyses the reaction Exonucleolytic cleavage in either 5'- to 3'- or 3'- to 5'-direction to yield nucleoside 5'-phosphates.. Functionally, bidirectionally degrades single-stranded DNA into large acid-insoluble oligonucleotides, which are then degraded further into small acid-soluble oligonucleotides. This Chlamydia felis (strain Fe/C-56) (Chlamydophila felis) protein is Exodeoxyribonuclease 7 large subunit.